The following is a 261-amino-acid chain: MIYKCPMCREFFSERADLFMHQKVHTAEKPHKCDKCDKGFFHISELHIHWRDHTGEKVYKCDDCGKDFSTTTKLNRHKKIHTVEKPYKCYECGKAFNWSPHLQIHMRVHTGEKPYVCSECGRGFSNSSNLCMHQRVHTGEKPFKCEECGKAFRHTSSLCMHQRVHTGEKPYKCYECGKAFSQSSSLCIHQRVHTGEKPYRCCGCGKAFSQSSSLCIHQRVHTGEKPFKCDECGKAFSQSTSLCIHQRVHTKERNHLKISVI.

9 C2H2-type zinc fingers span residues 3 to 25 (YKCP…QKVH), 31 to 53 (HKCD…WRDH), 59 to 81 (YKCD…KKIH), 87 to 109 (YKCY…MRVH), 115 to 137 (YVCS…QRVH), 143 to 165 (FKCE…QRVH), 171 to 193 (YKCY…QRVH), 199 to 221 (YRCC…QRVH), and 227 to 249 (FKCD…QRVH). K257 participates in a covalent cross-link: Glycyl lysine isopeptide (Lys-Gly) (interchain with G-Cter in SUMO2).

This sequence belongs to the krueppel C2H2-type zinc-finger protein family. Expressed in the organ of Corti, stria vascularis, auditory nerve and retina. Lower levels in the tongue, cerebellum, small intestine and kidney.

It is found in the nucleus. Functionally, may be involved in transcriptional regulation. The polypeptide is Zinc finger protein 664 (ZNF664) (Cavia porcellus (Guinea pig)).